The chain runs to 205 residues: ATP-dependent Clp protease proteolytic subunit (205 aa).

S108 functions as the Nucleophile in the catalytic mechanism. H133 is a catalytic residue.

This sequence belongs to the peptidase S14 family. As to quaternary structure, fourteen ClpP subunits assemble into 2 heptameric rings which stack back to back to give a disk-like structure with a central cavity, resembling the structure of eukaryotic proteasomes.

It is found in the cytoplasm. It carries out the reaction Hydrolysis of proteins to small peptides in the presence of ATP and magnesium. alpha-casein is the usual test substrate. In the absence of ATP, only oligopeptides shorter than five residues are hydrolyzed (such as succinyl-Leu-Tyr-|-NHMec, and Leu-Tyr-Leu-|-Tyr-Trp, in which cleavage of the -Tyr-|-Leu- and -Tyr-|-Trp bonds also occurs).. Functionally, cleaves peptides in various proteins in a process that requires ATP hydrolysis. Has a chymotrypsin-like activity. Plays a major role in the degradation of misfolded proteins. This Alcanivorax borkumensis (strain ATCC 700651 / DSM 11573 / NCIMB 13689 / SK2) protein is ATP-dependent Clp protease proteolytic subunit.